Here is a 434-residue protein sequence, read N- to C-terminus: MFLDTAKIKVKAGNGGDGMVAFRREKYVPNGGPWGGDGGRGGNVVFVVDEGLRTLMDFRYNRHFKADSGEKGMTKGMHGRGAEDLRVRVPQGTTVRDAETGKVLTDLIEHGQEFIVAHGGRGGRGNIRFATPKNPAPEISENGEPGQERELQLELKILADVGLVGFPSVGKSTLLSVITSAKPKIGAYHFTTIVPNLGMVRTQSGESFAVADLPGLIEGASQGVGLGTQFLRHIERTRVILHIIDMSASEGRDPYEDYLAINKELESYNLRLMERPQIIVANKMDMPESQENLEDFKKKLAENYDEFEELPAIFPISGLTKQGLATLLDATAELLDKTPEFLLYDESDMEEEAYYGFDEEEKAFEISRDDDATWVLSGEKLMKLFNMTNFDRDESVMKFARQLRGMGVDEALRARGAKDGDLVRIGKFEFEFVD.

The 158-residue stretch at 1-158 folds into the Obg domain; the sequence is MFLDTAKIKV…RELQLELKIL (158 aa). The 178-residue stretch at 159–336 folds into the OBG-type G domain; the sequence is ADVGLVGFPS…LLDATAELLD (178 aa). GTP is bound by residues 165 to 172, 190 to 194, 212 to 215, 282 to 285, and 317 to 319; these read GFPSVGKS, FTTIV, DLPG, NKMD, and SGL. Mg(2+) contacts are provided by Ser-172 and Thr-192. One can recognise an OCT domain in the interval 356–434; that stretch reads GFDEEEKAFE…IGKFEFEFVD (79 aa).

The protein belongs to the TRAFAC class OBG-HflX-like GTPase superfamily. OBG GTPase family. As to quaternary structure, monomer. It depends on Mg(2+) as a cofactor.

The protein resides in the cytoplasm. Functionally, an essential GTPase which binds GTP, GDP and possibly (p)ppGpp with moderate affinity, with high nucleotide exchange rates and a fairly low GTP hydrolysis rate. Plays a role in control of the cell cycle, stress response, ribosome biogenesis and in those bacteria that undergo differentiation, in morphogenesis control. In Streptococcus pneumoniae serotype 19F (strain G54), this protein is GTPase Obg.